The following is a 122-amino-acid chain: APPPVGDQAGGRKVNCSKYNAKGSQFACSRHLDPVCGTDHRTYSNECMFCMLTQNKRFSVRILQDNNCDIECTQYSDMCTMDYLPLCGSDGNNYSNKCLFCNAVLRSRGALFLAKHGQCESP.

Kazal-like domains lie at 10–70 (GGRK…NCDI) and 71–121 (ECTQ…QCES). Cystine bridges form between cysteine 16–cysteine 50, cysteine 28–cysteine 47, cysteine 36–cysteine 68, cysteine 72–cysteine 101, cysteine 79–cysteine 98, and cysteine 87–cysteine 119.

The protein resides in the secreted. This inhibitor is composed of two homologous actively inhibiting halves: one which inhibits trypsin, the other which inhibits elastase. The polypeptide is Double-headed protease inhibitor, submandibular gland (Meles meles (Eurasian badger)).